We begin with the raw amino-acid sequence, 810 residues long: DNA replication licensing factor mcm-6 (810 aa).

Positions 346-553 (IEKNIVDSLF…VTDYAIARRI (208 aa)) constitute an MCM domain. ATP is bound by residues serine 400, threonine 401, alanine 402, lysine 403, serine 404, and asparagine 505. An Arginine finger motif is present at residues 529–532 (SRFD). Residues arginine 622 and glutamate 625 each coordinate ADP. The interval 685-705 (KENQGGDDDMEHDGEKDETAK) is disordered.

This sequence belongs to the MCM family. Component of the mcm2-7 complex. The complex forms a toroidal hexameric ring with the proposed subunit order mcm2-mcm6-mcm4-mcm7-mcm3-mcm5 (By simililarity).

It is found in the nucleus. The enzyme catalyses ATP + H2O = ADP + phosphate + H(+). Its function is as follows. Acts as a component of the MCM2-7 complex (MCM complex) which is the replicative helicase essential for 'once per cell cycle' DNA replication initiation and elongation in eukaryotic cells. Core component of CDC45-MCM-GINS (CMG) helicase, the molecular machine that unwinds template DNA during replication, and around which the replisome is built. The active ATPase sites in the MCM2-7 ring are formed through the interaction surfaces of two neighboring subunits such that a critical structure of a conserved arginine finger motif is provided in trans relative to the ATP-binding site of the Walker A box of the adjacent subunit. The six ATPase active sites, however, are likely to contribute differentially to the complex helicase activity. The chain is DNA replication licensing factor mcm-6 from Caenorhabditis briggsae.